Reading from the N-terminus, the 456-residue chain is Cyclic AMP-responsive element-binding protein 3-like protein 3 (456 aa).

2 disordered regions span residues 1–20 and 47–120; these read MDGDLAIGKMASSTSPMGPI and GHGE…KGPC. Over 1-317 the chain is Cytoplasmic; sequence MDGDLAIGKM…STSKSAQTGT (317 aa). Polar residues predominate over residues 71-85; it reads DSDSPTWSPAASDSG. A bZIP domain is found at 238 to 301; that stretch reads MLKKIRRKIR…LSLLEQLKKL (64 aa). The basic motif stretch occupies residues 240–269; the sequence is KKIRRKIRNKQSAQESRKKKKEYIDGLETR. The leucine-zipper stretch occupies residues 280–301; sequence LQRKVLHLEKQNLSLLEQLKKL. Lys289 is covalently cross-linked (Glycyl lysine isopeptide (Lys-Gly) (interchain with G-Cter in ubiquitin)). Residues 318–338 traverse the membrane as a helical; Signal-anchor for type II membrane protein segment; it reads CIAVLLFSFALIVLPSISPFA. The Lumenal portion of the chain corresponds to 339–456; that stretch reads SNRAESPGDF…VGLEAAGGEL (118 aa). 2 disordered regions span residues 365-423 and 435-456; these read RVAP…QGNS and CAPPEPAVSPGHVGLEAAGGEL. Asn408 and Asn415 each carry an N-linked (GlcNAc...) asparagine glycan.

Belongs to the bZIP family. ATF subfamily. Binds DNA as a dimer. May form homodimers. Interacts with ATF6. Interacts with SYNV1/HRD1; this interaction leads to CREB3L3 ubiquitination and proteasomal degradation. Controlled by regulated intramembrane proteolysis (RIP). Following ER stress a fragment containing the cytoplasmic transcription factor domain is released by proteolysis. The cleavage seems to be performed sequentially by site-1 and site-2 proteases (PS1 and PS2). In terms of processing, N-glycosylation is required for optimal proteolytic activation. Post-translationally, ubiquitinated at Lys-289 by SYNV1/HRD1 via 'Lys-27'-linked ubiquitin.

It localises to the endoplasmic reticulum membrane. It is found in the nucleus. Its function is as follows. Transcription factor that may act during endoplasmic reticulum stress by activating unfolded protein response target genes. Activated in response to cAMP stimulation. In vitro, binds the cAMP response element (CRE). Activates transcription through box-B element and CRE. Seems to function synergistically with ATF6. In acute inflammatory response, may activate expression of acute phase response (APR) genes. May be involved in growth suppression. Regulates FGF21 transcription. Plays a crucial role in the regulation of triglyceride metabolism and is required for the maintenance of normal plasma triglyceride concentrations. The sequence is that of Cyclic AMP-responsive element-binding protein 3-like protein 3 (CREB3L3) from Bos taurus (Bovine).